Reading from the N-terminus, the 362-residue chain is S-adenosylmethionine-dependent nucleotide dehydratase RSAD2 (362 aa).

The tract at residues Gln49–Thr71 is disordered. Residues Glu56–His68 show a composition bias toward basic and acidic residues. The Radical SAM core domain occupies Pro70–Leu290. [4Fe-4S] cluster-binding residues include Cys84, Cys88, and Cys91. Lys198 is modified (N6-acetyllysine). Lys207 is covalently cross-linked (Glycyl lysine isopeptide (Lys-Gly) (interchain with G-Cter in ubiquitin)).

This sequence belongs to the radical SAM superfamily. RSAD2 family. Homodimer. Interacts with IRAK1 and TRAF6. Interacts with FPPS. Interacts with HADHB. Interacts (via C-terminus) with VAPA/VAP33 (via C-terminus). [4Fe-4S] cluster serves as cofactor. Acetylated by HAT1. HAT1-mediated acetylation of Lys-198 in turn recruits UBE4A that stimulates RSAD2 polyubiquitination leading to proteasomal degradation. In terms of processing, 'Lys-6'-linked polyubiquitination at Lys-207 leads to RSAD2 protein degradation.

The protein localises to the endoplasmic reticulum membrane. It is found in the golgi apparatus. The protein resides in the endoplasmic reticulum. It localises to the lipid droplet. Its subcellular location is the mitochondrion. The protein localises to the mitochondrion inner membrane. It is found in the mitochondrion outer membrane. The enzyme catalyses CTP + AH2 + S-adenosyl-L-methionine = 3'-deoxy-3',4'-didehydro-CTP + 5'-deoxyadenosine + L-methionine + A + H2O + H(+). With respect to regulation, IRAK1 and TRAF6 synergistically activate RSAD2 increasing its activity with CTP as substrate about 10-fold. Functionally, interferon-inducible antiviral protein which plays a major role in the cell antiviral state induced by type I and type II interferon. Catalyzes the conversion of cytidine triphosphate (CTP) to 3'-deoxy-3',4'-didehydro-CTP (ddhCTP) via a SAM-dependent radical mechanism. In turn, ddhCTP acts as a chain terminator for the RNA-dependent RNA polymerases from multiple viruses and directly inhibits viral replication. Therefore, inhibits a wide range of DNA and RNA viruses. Also promotes TLR7 and TLR9-dependent production of IFN-beta production in plasmacytoid dendritic cells (pDCs) by facilitating 'Lys-63'-linked ubiquitination of IRAK1 by TRAF6. Plays a role in CD4+ T-cells activation and differentiation. Facilitates T-cell receptor (TCR)-mediated GATA3 activation and optimal T-helper 2 (Th2) cytokine production by modulating NFKB1 and JUNB activities. Can inhibit secretion of soluble proteins. The chain is S-adenosylmethionine-dependent nucleotide dehydratase RSAD2 from Sus scrofa (Pig).